The primary structure comprises 585 residues: Amyloid protein-binding protein 2 (585 aa).

8 TPR repeats span residues glutamine 50–phenylalanine 83, isoleucine 120–histidine 153, alanine 206–glycine 239, serine 288–valine 321, histidine 333–isoleucine 367, alanine 429–leucine 462, alanine 471–leucine 505, and glutamate 514–arginine 547.

Component of a CRL2 E3 ubiquitin-protein ligase complex, also named ECS (Elongin BC-CUL2/5-SOCS-box protein) complex, composed of CUL2, Elongin BC (ELOB and ELOC), RBX1 and substrate-specific adapter APPBP2. Interacts with APP; APP interaction inhibits the E3 ubiquitin-protein ligase activity of the CRL2(APPBP2) complex. Rapidly degraded by the proteasome upon overexpression of a C-terminal fragment of APP.

The protein resides in the nucleus. It is found in the cytoplasm. The protein localises to the cytoskeleton. Its subcellular location is the membrane. The protein operates within protein modification; protein ubiquitination. Its activity is regulated as follows. E3 ubiquitin-protein ligase activity of the CRL2(APPBP2) complex is inhibited by APP. Its function is as follows. Substrate-recognition component of a Cul2-RING (CRL2) E3 ubiquitin-protein ligase complex of the DesCEND (destruction via C-end degrons) pathway, which recognizes a C-degron located at the extreme C terminus of target proteins, leading to their ubiquitination and degradation. The C-degron recognized by the DesCEND pathway is usually a motif of less than ten residues and can be present in full-length proteins, truncated proteins or proteolytically cleaved forms. The CRL2(APPBP2) complex specifically recognizes proteins with a -Arg-Xaa-Xaa-Gly degron at the C-terminus, leading to their ubiquitination and degradation. The CRL2(APPBP2) complex mediates ubiquitination and degradation of truncated SELENOV selenoproteins produced by failed UGA/Sec decoding, which end with a -Arg-Xaa-Xaa-Gly degron. May play a role in intracellular protein transport: may be involved in the translocation of APP along microtubules toward the cell surface. This is Amyloid protein-binding protein 2 from Homo sapiens (Human).